The chain runs to 267 residues: Hydroxyethylthiazole kinase (267 aa).

Met-49 is a binding site for substrate. Residues Arg-124 and Thr-170 each coordinate ATP. Gly-197 is a binding site for substrate.

It belongs to the Thz kinase family. Mg(2+) serves as cofactor.

It carries out the reaction 5-(2-hydroxyethyl)-4-methylthiazole + ATP = 4-methyl-5-(2-phosphooxyethyl)-thiazole + ADP + H(+). The protein operates within cofactor biosynthesis; thiamine diphosphate biosynthesis; 4-methyl-5-(2-phosphoethyl)-thiazole from 5-(2-hydroxyethyl)-4-methylthiazole: step 1/1. In terms of biological role, catalyzes the phosphorylation of the hydroxyl group of 4-methyl-5-beta-hydroxyethylthiazole (THZ). The sequence is that of Hydroxyethylthiazole kinase from Tolumonas auensis (strain DSM 9187 / NBRC 110442 / TA 4).